A 273-amino-acid polypeptide reads, in one-letter code: Tryptophan synthase alpha chain (273 aa).

Residues Glu-49 and Asp-60 each act as proton acceptor in the active site.

The protein belongs to the TrpA family. In terms of assembly, tetramer of two alpha and two beta chains.

The catalysed reaction is (1S,2R)-1-C-(indol-3-yl)glycerol 3-phosphate + L-serine = D-glyceraldehyde 3-phosphate + L-tryptophan + H2O. It functions in the pathway amino-acid biosynthesis; L-tryptophan biosynthesis; L-tryptophan from chorismate: step 5/5. The alpha subunit is responsible for the aldol cleavage of indoleglycerol phosphate to indole and glyceraldehyde 3-phosphate. This chain is Tryptophan synthase alpha chain, found in Albidiferax ferrireducens (strain ATCC BAA-621 / DSM 15236 / T118) (Rhodoferax ferrireducens).